Here is a 588-residue protein sequence, read N- to C-terminus: MFS siderochrome iron transporter 1 (588 aa).

A run of 13 helical transmembrane segments spans residues 60–80 (QVWS…ITFV), 104–124 (LTAS…LPLA), 133–153 (PQGF…MAAC), 161–181 (AAQV…SIFI), 191–211 (ALMF…GGPL), 225–245 (YGAF…VFAW), 278–298 (IIGI…FSLY), 307–327 (SSLV…FALY), 348–368 (LGAC…DSYF), 385–405 (YIVN…GILV), 413–433 (WLAL…MITF), 440–460 (IGYI…CVIT), and 473–495 (YVAV…GQTV). A glycan (N-linked (GlcNAc...) asparagine) is linked at Asn-519. Residues 552-572 (KYMLIGGTAILAVGLGATMMW) form a helical membrane-spanning segment.

Belongs to the major facilitator superfamily.

The protein localises to the membrane. Major facilitator transporter involved in siderophore transport. The chain is MFS siderochrome iron transporter 1 from Ajellomyces capsulatus (Darling's disease fungus).